We begin with the raw amino-acid sequence, 193 residues long: Large ribosomal subunit protein eL19B (193 aa).

The interval 157-179 is disordered; the sequence is EQQDARRARAKAARQRRAKAVEE. The segment covering 164–174 has biased composition (basic residues); the sequence is ARAKAARQRRA.

It belongs to the eukaryotic ribosomal protein eL19 family. Component of the large ribosomal subunit (LSU). Mature yeast ribosomes consist of a small (40S) and a large (60S) subunit. The 40S small subunit contains 1 molecule of ribosomal RNA (18S rRNA) and at least 33 different proteins. The large 60S subunit contains 3 rRNA molecules (25S, 5.8S and 5S rRNA) and at least 46 different proteins. eL19 lies in close proximity to the binding site for eukaryotic initiation factor eIF4G.

The protein resides in the cytoplasm. Component of the ribosome, a large ribonucleoprotein complex responsible for the synthesis of proteins in the cell. The small ribosomal subunit (SSU) binds messenger RNAs (mRNAs) and translates the encoded message by selecting cognate aminoacyl-transfer RNA (tRNA) molecules. The large subunit (LSU) contains the ribosomal catalytic site termed the peptidyl transferase center (PTC), which catalyzes the formation of peptide bonds, thereby polymerizing the amino acids delivered by tRNAs into a polypeptide chain. The nascent polypeptides leave the ribosome through a tunnel in the LSU and interact with protein factors that function in enzymatic processing, targeting, and the membrane insertion of nascent chains at the exit of the ribosomal tunnel. eL19 may play a role in the last stages of translation initiation, in particular subunit joining and shedding/releasing factors. This Schizosaccharomyces pombe (strain 972 / ATCC 24843) (Fission yeast) protein is Large ribosomal subunit protein eL19B (rpl1902).